The primary structure comprises 227 residues: MAFLILLRHGKSVWNEKNLFTGWVDIPLSQKGIDEAILAGQVIKDLPIDCIFTSSLVRSLMTALLAMTHHSSKKVPYIIHDAPQQKQMSRIYSEEEQHMIPLYRSSALNERMYGELQGKNKQETAEQFGEEQVKLWRRSYKIAPPKGESLYDTGQRTIPYFQETIFPLLQNSKNVFISAHGNSLRSLIMDIEKLSEEEVLSLELPTGKPLVYLWTGHTFERRPEPFG.

Residues 8-15 (RHGKSVWN), 21-22 (TG), Arg-58, 110-113 (ERMY), Lys-121, 137-138 (RR), and 181-182 (GN) each bind substrate. The Tele-phosphohistidine intermediate role is filled by His-9. The active-site Proton donor/acceptor is the Glu-110.

The protein belongs to the phosphoglycerate mutase family. BPG-dependent PGAM subfamily.

It catalyses the reaction (2R)-2-phosphoglycerate = (2R)-3-phosphoglycerate. The protein operates within carbohydrate degradation; glycolysis; pyruvate from D-glyceraldehyde 3-phosphate: step 3/5. Its function is as follows. Catalyzes the interconversion of 2-phosphoglycerate and 3-phosphoglycerate. The protein is 2,3-bisphosphoglycerate-dependent phosphoglycerate mutase of Chlamydia felis (strain Fe/C-56) (Chlamydophila felis).